A 558-amino-acid polypeptide reads, in one-letter code: Oligo-1,6-glucosidase (558 aa).

Ca(2+)-binding residues include D21, N23, D25, and D29. Catalysis depends on D199, which acts as the Nucleophile. The Proton donor role is filled by E255.

It belongs to the glycosyl hydrolase 13 family.

The protein localises to the cytoplasm. It catalyses the reaction Hydrolysis of (1-&gt;6)-alpha-D-glucosidic linkages in some oligosaccharides produced from starch and glycogen by alpha-amylase, and in isomaltose.. In Bacillus cereus, this protein is Oligo-1,6-glucosidase (malL).